A 319-amino-acid polypeptide reads, in one-letter code: Transcription factor bHLH111 (319 aa).

Positions 1–23 are disordered; it reads MDHHHHIASRNSSTTSELPSFEP. The span at 9 to 18 shows a compositional bias: polar residues; that stretch reads SRNSSTTSEL. The 50-residue stretch at 195 to 244 folds into the bHLH domain; sequence SEGSTLSPEKELPKAKLRDKITTLQQIVSPFGKTDTASVLQEAITYINFY.

As to quaternary structure, homodimer.

Its subcellular location is the nucleus. This is Transcription factor bHLH111 (BHLH111) from Arabidopsis thaliana (Mouse-ear cress).